Consider the following 256-residue polypeptide: Transcription factor bHLH131 (256 aa).

In terms of domain architecture, bHLH spans 91-140; it reads VAAKKHSDAERRRRLRINSQFATLRTILPNLVKQDKASVLGETVRYFNEL.

As to quaternary structure, homodimer.

It is found in the nucleus. This is Transcription factor bHLH131 (BHLH131) from Arabidopsis thaliana (Mouse-ear cress).